The primary structure comprises 628 residues: Siderophore iron transporter 1 (628 aa).

The next 14 membrane-spanning stretches (helical) occupy residues 68-88, 107-127, 132-152, 164-184, 194-214, 225-245, 285-305, 317-337, 354-374, 394-414, 420-440, 448-468, 488-508, and 559-579; these read IYRV…GLDG, LLST…IFFA, IFGR…GTII, VGGC…EVIA, LLAL…SGNV, GIGM…ICML, IIGM…FTLA, IIVP…LWEI, GIFF…MQGD, ITSL…FILI, KPFI…LVHY, SGII…TYVT, LYLA…GAVW, and KILC…AFML.

Belongs to the major facilitator superfamily.

The protein resides in the endosome membrane. Functionally, involved in the transport of siderophore ferrioxamine B and so has a role in iron homeostasis. This Saccharomyces cerevisiae (strain ATCC 204508 / S288c) (Baker's yeast) protein is Siderophore iron transporter 1 (SIT1).